The primary structure comprises 209 residues: Ribosomal RNA large subunit methyltransferase E (209 aa).

S-adenosyl-L-methionine-binding residues include Gly-60, Trp-62, Asp-80, Asp-96, and Asp-121. Catalysis depends on Lys-161, which acts as the Proton acceptor.

This sequence belongs to the class I-like SAM-binding methyltransferase superfamily. RNA methyltransferase RlmE family.

The protein resides in the cytoplasm. The catalysed reaction is uridine(2552) in 23S rRNA + S-adenosyl-L-methionine = 2'-O-methyluridine(2552) in 23S rRNA + S-adenosyl-L-homocysteine + H(+). Specifically methylates the uridine in position 2552 of 23S rRNA at the 2'-O position of the ribose in the fully assembled 50S ribosomal subunit. In Pseudomonas fluorescens (strain Pf0-1), this protein is Ribosomal RNA large subunit methyltransferase E.